The sequence spans 264 residues: MSSTESPGRTSDKSPRQQVDRLLLGLRWQRLEEPLGFIKVLQWLFAIFAFGSCGSYSGETGALVLCNNEAKDVSSIIVLFGYPFRLYQVQYEMPLCDQDSTSKTMNLMGDFSAPAEFFVTLGIFSFFYTMAALVIYLRFHKLYTENKRFPLVDFCVTVSFTFFWLVAAAAWGKGLTDVKGATRPSSLTAAMSVCHGEEAVCSAGATPSMGLANLSVLFGFINFFLWAGNCWFVFKETPWHGQGQDQGQGPSQESAAEQGAVEKQ.

Over 1-33 the chain is Cytoplasmic; the sequence is MSSTESPGRTSDKSPRQQVDRLLLGLRWQRLEE. Residues 30–238 enclose the MARVEL domain; that stretch reads RLEEPLGFIK…NCWFVFKETP (209 aa). The helical transmembrane segment at 34–54 threads the bilayer; sequence PLGFIKVLQWLFAIFAFGSCG. Residues 55 to 116 are Vesicular-facing; it reads SYSGETGALV…LMGDFSAPAE (62 aa). Residues 117–137 form a helical membrane-spanning segment; the sequence is FFVTLGIFSFFYTMAALVIYL. Residues 138 to 150 lie on the Cytoplasmic side of the membrane; sequence RFHKLYTENKRFP. A helical membrane pass occupies residues 151–171; that stretch reads LVDFCVTVSFTFFWLVAAAAW. Topologically, residues 172–213 are vesicular; the sequence is GKGLTDVKGATRPSSLTAAMSVCHGEEAVCSAGATPSMGLAN. Asn213 carries N-linked (GlcNAc...) asparagine glycosylation. The helical transmembrane segment at 214 to 234 threads the bilayer; sequence LSVLFGFINFFLWAGNCWFVF. Residues 235–264 lie on the Cytoplasmic side of the membrane; sequence KETPWHGQGQDQGQGPSQESAAEQGAVEKQ. The segment at 242-264 is disordered; it reads QGQDQGQGPSQESAAEQGAVEKQ.

It belongs to the synaptophysin/synaptobrevin family. Expressed abundantly in skeletal muscle and at lower levels in the kidney.

It is found in the membrane. Involved in communication between the T-tubular and junctional sarcoplasmic reticulum (SR) membranes. The chain is Synaptophysin-like protein 2 (Sypl2) from Mus musculus (Mouse).